We begin with the raw amino-acid sequence, 250 residues long: Pre-protein VI (250 aa).

A propeptide spanning residues 1 to 33 is cleaved from the precursor; it reads MEDINFASLAPRHGSRPFMGNWQDIGTSNMSGG. The interval 34–54 is amphipathic alpha-helix essential for membrane lytic activity; it reads AFSWGSLWSGIKNFGSTVKNY. The involved in endosomal membrane lysis stretch occupies residues 36 to 53; that stretch reads SWGSLWSGIKNFGSTVKN. The interval 48–74 is interaction with hexon protein; the sequence is GSTVKNYGSKAWNSSTGQMLRDKLKEQ. A Nuclear export signal motif is present at residues 67 to 76; that stretch reads LRDKLKEQNF. Residues 103–148 are disordered; it reads INSKLDPRPPVEEPPPAVETVSPEGRGEKRPRPDREETLVTQIDEP. S124 is modified (phosphoserine; by host). Residues 127-140 show a composition bias toward basic and acidic residues; the sequence is GRGEKRPRPDREET. The Nuclear localization signal motif lies at 131-135; the sequence is KRPRP. Phosphothreonine; by host is present on T143. Residues 148 to 151 carry the PPXY motif motif; that stretch reads PPSY. The Nuclear export signal signature appears at 231–242; it reads STLNSIVGLGVQ. Residues 233 to 239 form an interaction with hexon protein region; sequence LNSIVGL. The binds to importin alpha/beta, involved in hexon nuclear import stretch occupies residues 240-250; sequence GVQSLKRRRCF. A Nuclear localization signal motif is present at residues 245–248; it reads KRRR.

Belongs to the adenoviridae protein VI family. In terms of assembly, interacts with hexon protein; this interaction allows nuclear import of hexon trimers and possibly pre-capsid assembly. Interacts (via C-terminal NLS) with importin alpha/beta. Interacts (via PPxY motif) with host NEDD4 ubiquitine ligase; this interaction might play a role in virus intracellular transport during entry. Part of a complex composed of the core-capsid bridging protein, the endosome lysis protein VI and the hexon-linking protein VIII; these interactions bridge the virus core to the capsid. Interacts with peripentonal hexons; this interaction stabilizes the capsid by gluing two peripentonal hexons together and joining them with an adjacent group-of-nine hexon. As to quaternary structure, heterodimer with the viral protease; disulfide-linked. Interacts with the viral protease. Post-translationally, ubiquitinated by Nedd4 following partial capsid disassembly; which might play a role in intracellular virus movement during entry. In terms of processing, contains the major nuclear import and export signals. Proteolytically removed during virion maturation. The processing of the C-terminus turns the precursor into a mature viral structural protein and abrogates its ability to promote hexon import and act as a potential chaperone protein.

It is found in the host nucleus. The protein resides in the host cytoplasm. It localises to the virion. In terms of biological role, during virus assembly, promotes hexon trimers nuclear import through nuclear pore complexes via an importin alpha/beta-dependent mechanism. By analogy to herpesviruses capsid assembly, might act as a chaperone to promote the formation of the icosahedral capsid. Its function is as follows. Structural component of the virion that provides increased stability to the particle shell through its interaction with the core-capsid bridging protein and the hexon-linking protein VIII. Fibers shedding during virus entry into host cell allows the endosome lysis protein to be exposed as a membrane-lytic peptide. Exhibits pH-independent membrane fragmentation activity and probably mediates viral rapid escape from host endosome via organellar membrane lysis. It is not clear if it then remains partially associated with the capsid and involved in the intracellular microtubule-dependent transport of capsid to the nucleus, or if it is lost during endosomal penetration. Functionally, cofactor that activates the viral protease. Binds to viral protease in a 1:1 ratio. This is Pre-protein VI from Homo sapiens (Human).